A 376-amino-acid chain; its full sequence is DnaJ homolog subfamily B member 12 (376 aa).

An N-acetylmethionine modification is found at Met-1. The interval 45–97 (ALIESLNQKPQSTGDHPQPTDTTHTTTKKAGGTETPSANGEAGGGESAKGYTS) is disordered. A compositionally biased stretch (low complexity) spans 57–84 (TGDHPQPTDTTHTTTKKAGGTETPSANG). The region spanning 111 to 175 (DYYEILGVSR…EKRKQYDQFG (65 aa)) is the J domain. His-186 bears the Pros-methylhistidine mark. The chain crosses the membrane as a helical span at residues 243 to 263 (GGLGVFVQLMPILILILVSAL).

It belongs to the DnaJ family. DNAJB12/DNAJB14 subfamily. As to quaternary structure, homodimer and homotetramer. Interacts (via J domain) with HSPA8/Hsc70. Forms a multiprotein complex, at least composed of DNAJB12, DNAJB14, HSPA8/Hsc70 and SGTA; interaction with DNAJB14 and HSPA8/Hsc70 is direct. In terms of processing, methylated at His-186 by METTL9.

Its subcellular location is the endoplasmic reticulum membrane. It localises to the nucleus membrane. Functionally, acts as a co-chaperone with HSPA8/Hsc70; required to promote protein folding and trafficking, prevent aggregation of client proteins, and promote unfolded proteins to endoplasmic reticulum-associated degradation (ERAD) pathway. Acts by determining HSPA8/Hsc70's ATPase and polypeptide-binding activities. Can also act independently of HSPA8/Hsc70: together with DNAJB14, acts as a chaperone that promotes maturation of potassium channels KCND2 and KCNH2 by stabilizing nascent channel subunits and assembling them into tetramers. While stabilization of nascent channel proteins is dependent on HSPA8/Hsc70, the process of oligomerization of channel subunits is independent of HSPA8/Hsc70. When overexpressed, forms membranous structures together with DNAJB14 and HSPA8/Hsc70 within the nucleus; the role of these structures, named DJANGOs, is still unclear. The chain is DnaJ homolog subfamily B member 12 from Mus musculus (Mouse).